Here is a 58-residue protein sequence, read N- to C-terminus: Attractin (58 aa).

Cystine bridges form between Cys4–Cys41, Cys13–Cys33, and Cys20–Cys26. N-linked (GlcNAc...) asparagine glycosylation is present at Asn8.

Produced by the albumen gland of the egg cordons.

It localises to the secreted. Its function is as follows. Water-borne pheromone that attract the marine mollusk Aplysia into breeding aggregations and coordinate male and female reproductive behavior within the aggregation. In Aplysia fasciata (Mottled sea hare), this protein is Attractin (ATT).